Here is a 310-residue protein sequence, read N- to C-terminus: NADP-dependent D-sorbitol-6-phosphate dehydrogenase (310 aa).

Tyrosine 48 serves as the catalytic Proton donor. Histidine 108 serves as a coordination point for substrate. 210–272 contacts NADP(+); it reads TPLGGAAANK…SSKIQRLKEN (63 aa).

Belongs to the aldo/keto reductase family.

The catalysed reaction is D-sorbitol 6-phosphate + NADP(+) = aldehydo-D-glucose 6-phosphate + NADPH + H(+). Synthesizes sorbitol-6-phosphate, a key intermediate in the synthesis of sorbitol which is a major photosynthetic product in many members of the Rosaceae family. In Malus domestica (Apple), this protein is NADP-dependent D-sorbitol-6-phosphate dehydrogenase (S6PDH).